The primary structure comprises 164 residues: Peptidyl-prolyl cis-trans isomerase A (164 aa).

The residue at position 1 (Met-1) is an N-acetylmethionine. Val-2 bears the N-acetylvaline; in Peptidyl-prolyl cis-trans isomerase A, N-terminally processed mark. In terms of domain architecture, PPIase cyclophilin-type spans 7 to 163 (FFDISADGEP…KKITISDCGQ (157 aa)). At Lys-28 the chain carries N6-acetyllysine; alternate. Lys-28 is covalently cross-linked (Glycyl lysine isopeptide (Lys-Gly) (interchain with G-Cter in SUMO2); alternate). Lys-28 is covalently cross-linked (Glycyl lysine isopeptide (Lys-Gly) (interchain with G-Cter in ubiquitin); alternate). An N6-acetyllysine modification is found at Lys-44. The residue at position 77 (Ser-77) is a Phosphoserine. Lys-82 carries the N6-acetyllysine; alternate modification. Lys-82 is covalently cross-linked (Glycyl lysine isopeptide (Lys-Gly) (interchain with G-Cter in SUMO2); alternate). At Thr-93 the chain carries Phosphothreonine. A glycan (N-linked (GlcNAc...) asparagine) is linked at Asn-108. Residues Lys-125, Lys-131, and Lys-133 each carry the N6-acetyllysine modification.

Belongs to the cyclophilin-type PPIase family. PPIase A subfamily. As to quaternary structure, interacts with protein phosphatase PPP3CA/calcineurin A. Interacts with PRPF19 isoform 2 (via N-terminus). Interacts with isoform 2 of BSG/CD147. Interacts with FOXO1; the interaction promotes FOXO1 dephosphorylation, nuclear accumulation and transcriptional activity. Interacts with integrin ITGA2B:ITGB3; the interaction is ROS and peptidyl-prolyl cis-trans isomerase (PPIase) activity-dependent and is increased in the presence of thrombin. Interacts with MAP3K5. Interacts with TARDBP; the interaction is dependent on the RNA-binding activity of TARDBP and the PPIase activity of PPIA/CYPA and the acetylation of PPIA/CYPA at Lys-125 favors the interaction. Interacts with HNRNPA1, HNRNPA2B1, HNRNPC, RBMX, HNRNPK and HNRNPM. In terms of processing, acetylation at Lys-125 markedly inhibits catalysis of cis to trans isomerization. PPIA acetylation also antagonizes the immunosuppressive effects of cyclosporine by inhibiting the sequential steps of cyclosporine binding and calcineurin inhibition. Acetylation at Lys-125 favors the interaction with TARDBP.

It is found in the cytoplasm. The protein resides in the secreted. It localises to the nucleus. The catalysed reaction is [protein]-peptidylproline (omega=180) = [protein]-peptidylproline (omega=0). Its activity is regulated as follows. Binds cyclosporin A (CsA). CsA mediates some of its effects via an inhibitory action on PPIase. Catalyzes the cis-trans isomerization of proline imidic peptide bonds in oligopeptides. Exerts a strong chemotactic effect on leukocytes partly through activation of one of its membrane receptors BSG/CD147, initiating a signaling cascade that culminates in MAPK/ERK activation. Activates endothelial cells (ECs) in a proinflammatory manner by stimulating activation of NF-kappa-B and ERK, JNK and p38 MAP-kinases and by inducing expression of adhesion molecules including SELE and VCAM1. Induces apoptosis in ECs by promoting the FOXO1-dependent expression of CCL2 and BCL2L11 which are involved in EC chemotaxis and apoptosis. In response to oxidative stress, initiates proapoptotic and antiapoptotic signaling in ECs via activation of NF-kappa-B and AKT1 and up-regulation of antiapoptotic protein BCL2. Negatively regulates MAP3K5/ASK1 kinase activity, autophosphorylation and oxidative stress-induced apoptosis mediated by MAP3K5/ASK1. Necessary for the assembly of TARDBP in heterogeneous nuclear ribonucleoprotein (hnRNP) complexes and regulates TARDBP binding to RNA UG repeats and TARDBP-dependent expression of HDAC6, ATG7 and VCP which are involved in clearance of protein aggregates. Plays an important role in platelet activation and aggregation. Regulates calcium mobilization and integrin ITGA2B:ITGB3 bidirectional signaling via increased ROS production as well as by facilitating the interaction between integrin and the cell cytoskeleton. Binds heparan sulfate glycosaminoglycans. This Cricetulus griseus (Chinese hamster) protein is Peptidyl-prolyl cis-trans isomerase A (PPIA).